A 451-amino-acid polypeptide reads, in one-letter code: Prenyltransferase asqH1 (451 aa).

The disordered stretch occupies residues 14-37 (AEDQSTRKVHWGQEGSGQSPEARP). Position 120 (E120) interacts with L-tryptophan. Residues R137, R274, K276, Y278, and Y373 each coordinate substrate.

The protein belongs to the tryptophan dimethylallyltransferase family.

It carries out the reaction quinolinone B + dimethylallyl diphosphate = peniprequinolone + diphosphate. Its pathway is secondary metabolite biosynthesis. It participates in alkaloid biosynthesis. The protein operates within mycotoxin biosynthesis. Prenyltransferase; part of the gene cluster that mediates the biosynthesis of the aspoquinolone mycotoxins. Within the pathway, the prenyltransferase asqH1 catalyzes the canonical Friedel-Crafts alkylation of quinolinone B with dimethylallyl cation to yield dimethylallyl quinolone. The first step of the pathway is catalyzed by the nonribosomal peptide synthetase asqK that condenses anthranilic acid and O-methyl-L-tyrosine to produce 4'-methoxycyclopeptin. 4'-methoxycyclopeptin is then converted to 4'-methoxydehydrocyclopeptin by the ketoglutarate-dependent dioxygenase asqJ. AsqJ also converts its first product 4'-methoxydehydrocyclopeptin to 4'-methoxycyclopenin. The following conversion of 4'-methoxycyclopenin into 4'-methoxyviridicatin is catalyzed by the cyclopenase asqI. 4'-methoxyviridicatin is the precursor of quinolone natural products, and is further converted to quinolinone B. The prenyltransferase asqH1 then catalyzes the canonical Friedel-Crafts alkylation of quinolinone B with dimethylallyl cation to yield dimethylallyl quinolone, which is subjected to FAD-dependent dehydrogenation by the FAD-linked oxidoreductase asqF to yield conjugated aryl diene. The delta(3') double bond then serves as the site of the second alkylation with DMAPP catalyzed by the prenyltransferase asqH2 to yield a carbenium ion intermediate, which can be attacked by H(2)O to yield a styrenyl quinolone containing a C3'-hydroxyprenyl chain. The FAD-dependent monooxygenase asqG performs epoxidation of the terminal C7'-C8' olefin. Finally, after dehydratation of the epoxide at C3 by asqC, the quinolone epoxide rearrangement protein asqO catalyzes an enzymatic 3-exo-tet cyclization to yield the cyclopropyl-THF ring system in aspoquinolone. The chain is Prenyltransferase asqH1 from Emericella nidulans (strain FGSC A4 / ATCC 38163 / CBS 112.46 / NRRL 194 / M139) (Aspergillus nidulans).